Reading from the N-terminus, the 178-residue chain is Inner membrane-spanning protein YciB (178 aa).

A run of 5 helical transmembrane segments spans residues 22 to 42, 50 to 70, 76 to 96, 121 to 141, and 149 to 169; these read IFWA…YSWY, MTLV…YFHN, WKVT…QWVM, IAWA…AFWL, and FKVF…GVYI.

This sequence belongs to the YciB family.

It localises to the cell inner membrane. Plays a role in cell envelope biogenesis, maintenance of cell envelope integrity and membrane homeostasis. This Cronobacter sakazakii (strain ATCC BAA-894) (Enterobacter sakazakii) protein is Inner membrane-spanning protein YciB.